The primary structure comprises 281 residues: MININGEIKVDNAAPFVLFGGINVLESRDLAMRSCEEYVRVTGKLGIPYVFKASFDKANRSSIHSYRGPGLEEGLRIFEDVKKTFGVPLITDVHEPYQAKIAAEVIDVLQLPAFLARQTDLVVALAQTGRVINIKKPQFLSPPQMLNIVEKFREAGNDKLILCDRGTCFGYDNLVVDMLGFGVMKKVTGNLPIIFDVTHALQQRDSLGTASGGRREQVADLARAGMGVGLAGLFLEAHPDPKVAKCDGPSALPLDKLEPFLAQLKQLDDLVKSFAPLDIEA.

It belongs to the KdsA family.

The protein localises to the cytoplasm. It catalyses the reaction D-arabinose 5-phosphate + phosphoenolpyruvate + H2O = 3-deoxy-alpha-D-manno-2-octulosonate-8-phosphate + phosphate. The protein operates within carbohydrate biosynthesis; 3-deoxy-D-manno-octulosonate biosynthesis; 3-deoxy-D-manno-octulosonate from D-ribulose 5-phosphate: step 2/3. It functions in the pathway bacterial outer membrane biogenesis; lipopolysaccharide biosynthesis. The sequence is that of 2-dehydro-3-deoxyphosphooctonate aldolase from Janthinobacterium sp. (strain Marseille) (Minibacterium massiliensis).